Consider the following 530-residue polypeptide: MARLCTHTESGHYLMALDAGTGSVRAVIFDLQGKQIAVGQAEWQHLAVPDVPGSMEFDLAKNWQLACQCIRQALQKAAIPATAIAAVSACSMREGIVIYDSNGEPIWACANVDARAAHEVSELKELYDNTFEEEVYRCSGQTLALSAIPRLLWLAHHRPDIYHRASTVTMISDWMAFMLSGELAVDPSNAGTTGLLDLVTRNWKRSLLQMAGLRSDILSPVKETGTLLGHISQKAAEQCDLQAGTPVIVGGGDVQLGCLGLGVVRPAQTAVLGGTFWQQVVNLPAPVTDPNMNVRINPHVIPGMVQTESISFFTGLTMRWFRDAFCAEEKLIAERLGIDAYSLLEDMASRVPPGAYGVMPIFSDVMRFKRWYHAAPSFINLSIDPEKCNKATLFRALEENAAIVSACNLQQIAAFSGVQADSLVFAGGGSKGKLWSQILADVTGLTVHVPVVKEATALGCAIAAGVGVGVWPSLAETGEKLVRWDREHKPNPENFAVYQQAREKWQAVYQDQRALVDGGLTTSLWKAPGL.

The protein belongs to the FGGY kinase family.

Its subcellular location is the cytoplasm. The catalysed reaction is (S)-4,5-dihydroxypentane-2,3-dione + ATP = (2S)-2-hydroxy-3,4-dioxopentyl phosphate + ADP + H(+). In terms of biological role, catalyzes the phosphorylation of autoinducer-2 (AI-2) to phospho-AI-2, which subsequently inactivates the transcriptional regulator LsrR and leads to the transcription of the lsr operon. Phosphorylates the ring-open form of (S)-4,5-dihydroxypentane-2,3-dione (DPD), which is the precursor to all AI-2 signaling molecules, at the C5 position. The protein is Autoinducer-2 kinase of Salmonella typhimurium (strain LT2 / SGSC1412 / ATCC 700720).